The following is a 395-amino-acid chain: DDB1- and CUL4-associated factor 4-like protein 2 (395 aa).

2 WD repeats span residues 268–307 (SHDS…CVTQ) and 312–351 (VNNS…LLTT).

In Homo sapiens (Human), this protein is DDB1- and CUL4-associated factor 4-like protein 2 (DCAF4L2).